The primary structure comprises 309 residues: NAD-dependent protein deacylase sirtuin-5B, mitochondrial (309 aa).

A mitochondrion-targeting transit peptide spans 1 to 35 (MILLPFHTRRLVSHVYCGLKPASQNKGIALEMTRP). In terms of domain architecture, Deacetylase sirtuin-type spans 36 to 306 (SSNLANFREA…PPALARHETE (271 aa)). An NAD(+)-binding site is contributed by 57-76 (GAGVSAESGVPTIIGAGGYW). The substrate site is built by tyrosine 101 and arginine 104. 139–142 (QNID) contacts NAD(+). The Proton acceptor role is filled by histidine 157. Zn(2+) is bound by residues cysteine 165, cysteine 168, cysteine 206, and cysteine 211. NAD(+)-binding positions include 248–250 (GTS), 274–276 (NME), and cysteine 292.

This sequence belongs to the sirtuin family. Class III subfamily. It depends on Zn(2+) as a cofactor.

The protein resides in the mitochondrion. It localises to the cytoplasm. Its subcellular location is the cytosol. The protein localises to the nucleus. It carries out the reaction N(6)-malonyl-L-lysyl-[protein] + NAD(+) + H2O = 2''-O-malonyl-ADP-D-ribose + nicotinamide + L-lysyl-[protein]. It catalyses the reaction N(6)-succinyl-L-lysyl-[protein] + NAD(+) + H2O = 2''-O-succinyl-ADP-D-ribose + nicotinamide + L-lysyl-[protein]. The enzyme catalyses N(6)-glutaryl-L-lysyl-[protein] + NAD(+) + H2O = 2''-O-glutaryl-ADP-D-ribose + nicotinamide + L-lysyl-[protein]. NAD-dependent lysine demalonylase, desuccinylase and deglutarylase that specifically removes malonyl, succinyl and glutaryl groups on target proteins. Has weak NAD-dependent protein deacetylase activity; however this activity may not be physiologically relevant in vivo. This Xenopus laevis (African clawed frog) protein is NAD-dependent protein deacylase sirtuin-5B, mitochondrial (sirt5-b).